The primary structure comprises 775 residues: Mitochondrial intermediate peptidase (775 aa).

The N-terminal 28 residues, 1–28, are a transit peptide targeting the mitochondrion; sequence MIARPARDVLSSATKKQFRFRGCLAARH. His-558 serves as a coordination point for Zn(2+). Glu-559 is a catalytic residue. 2 residues coordinate Zn(2+): His-562 and His-565.

Belongs to the peptidase M3 family. Zn(2+) serves as cofactor.

Its subcellular location is the mitochondrion matrix. The catalysed reaction is Release of an N-terminal octapeptide as second stage of processing of some proteins imported into the mitochondrion.. Functionally, cleaves proteins, imported into the mitochondrion, to their mature size. While most mitochondrial precursor proteins are processed to the mature form in one step by mitochondrial processing peptidase (MPP), the sequential cleavage by MIP of an octapeptide after initial processing by MPP is a required step for a subgroup of nuclear-encoded precursor proteins destined for the matrix or the inner membrane. This is Mitochondrial intermediate peptidase (OCT1) from Schizophyllum commune (Split gill fungus).